A 118-amino-acid chain; its full sequence is Elicitin (118 aa).

Positions Met-1–Ala-20 are cleaved as a signal peptide. 3 disulfide bridges follow: Cys-23–Cys-91, Cys-47–Cys-76, and Cys-71–Cys-115.

Belongs to the elicitin family.

It localises to the secreted. In terms of biological role, induces local and distal defense responses (incompatible hypersensitive reaction) in plants from the solanaceae and cruciferae families. Elicits leaf necrosis and causes the accumulation of pathogenesis-related proteins. Might interact with the lipidic molecules of the plasma membrane. This is Elicitin (PARA1) from Phytophthora nicotianae (Potato buckeye rot agent).